The primary structure comprises 219 residues: LexA repressor (219 aa).

The segment at residues 28–48 (RAEIAAELGFRSANAAEEHLQ) is a DNA-binding region (H-T-H motif). Active-site for autocatalytic cleavage activity residues include Ser-138 and Lys-175.

The protein belongs to the peptidase S24 family. As to quaternary structure, homodimer.

It carries out the reaction Hydrolysis of Ala-|-Gly bond in repressor LexA.. In terms of biological role, represses a number of genes involved in the response to DNA damage (SOS response), including recA and lexA. In the presence of single-stranded DNA, RecA interacts with LexA causing an autocatalytic cleavage which disrupts the DNA-binding part of LexA, leading to derepression of the SOS regulon and eventually DNA repair. This chain is LexA repressor, found in Herminiimonas arsenicoxydans.